A 378-amino-acid polypeptide reads, in one-letter code: Erythronate-4-phosphate dehydrogenase (378 aa).

Substrate-binding residues include Ser-45 and Thr-66. Residues Asp-146 and Thr-175 each coordinate NAD(+). Residue Arg-208 is part of the active site. An NAD(+)-binding site is contributed by Asp-232. Glu-237 is a catalytic residue. The Proton donor role is filled by His-254. Gly-257 is a binding site for NAD(+). Tyr-258 serves as a coordination point for substrate.

Belongs to the D-isomer specific 2-hydroxyacid dehydrogenase family. PdxB subfamily. In terms of assembly, homodimer.

It is found in the cytoplasm. It catalyses the reaction 4-phospho-D-erythronate + NAD(+) = (R)-3-hydroxy-2-oxo-4-phosphooxybutanoate + NADH + H(+). It functions in the pathway cofactor biosynthesis; pyridoxine 5'-phosphate biosynthesis; pyridoxine 5'-phosphate from D-erythrose 4-phosphate: step 2/5. Catalyzes the oxidation of erythronate-4-phosphate to 3-hydroxy-2-oxo-4-phosphonooxybutanoate. This is Erythronate-4-phosphate dehydrogenase from Escherichia coli (strain 55989 / EAEC).